The chain runs to 92 residues: Small ribosomal subunit protein bS21A (92 aa).

Over residues 25-52 (GVFREMKQRRSYEKPSERKTREKSEAIR) the composition is skewed to basic and acidic residues. A disordered region spans residues 25–92 (GVFREMKQRR…LPQTAARPAG (68 aa)).

It belongs to the bacterial ribosomal protein bS21 family.

This Bradyrhizobium diazoefficiens (strain JCM 10833 / BCRC 13528 / IAM 13628 / NBRC 14792 / USDA 110) protein is Small ribosomal subunit protein bS21A.